The following is a 386-amino-acid chain: ATP phosphoribosyltransferase regulatory subunit (386 aa).

The protein belongs to the class-II aminoacyl-tRNA synthetase family. HisZ subfamily. In terms of assembly, heteromultimer composed of HisG and HisZ subunits.

It is found in the cytoplasm. It participates in amino-acid biosynthesis; L-histidine biosynthesis; L-histidine from 5-phospho-alpha-D-ribose 1-diphosphate: step 1/9. Its function is as follows. Required for the first step of histidine biosynthesis. May allow the feedback regulation of ATP phosphoribosyltransferase activity by histidine. This is ATP phosphoribosyltransferase regulatory subunit from Ralstonia nicotianae (strain ATCC BAA-1114 / GMI1000) (Ralstonia solanacearum).